We begin with the raw amino-acid sequence, 318 residues long: Ribose-phosphate pyrophosphokinase 2 (318 aa).

ATP is bound at residue 96–101; that stretch reads RQDKKD. Mg(2+) contacts are provided by Asp-128, His-130, Asp-139, and Asp-143. His-130 is an ATP binding site. The binding of phosphoribosylpyrophosphate stretch occupies residues 212–227; sequence KDRVAILVDDMADTCG.

This sequence belongs to the ribose-phosphate pyrophosphokinase family. In terms of assembly, homodimer. The active form is probably a hexamer composed of 3 homodimers. Mg(2+) serves as cofactor.

The catalysed reaction is D-ribose 5-phosphate + ATP = 5-phospho-alpha-D-ribose 1-diphosphate + AMP + H(+). It functions in the pathway metabolic intermediate biosynthesis; 5-phospho-alpha-D-ribose 1-diphosphate biosynthesis; 5-phospho-alpha-D-ribose 1-diphosphate from D-ribose 5-phosphate (route I): step 1/1. With respect to regulation, activated by magnesium and inorganic phosphate. Competitively or non-competitively inhibited by ADP, 2,3-bisphosphoglyceride or GDP. Functionally, catalyzes the synthesis of phosphoribosylpyrophosphate (PRPP) that is essential for nucleotide synthesis. The sequence is that of Ribose-phosphate pyrophosphokinase 2 (PRPS2) from Homo sapiens (Human).